Consider the following 236-residue polypeptide: MTPRLFALIPCAGTGSRSGSAVPKQYRTLAGRALLHYTLAAFDACSEFAQTLVVLAPDDTHFDARRFAGLRFAVRRCGGGSRQASVLNGLLGLAEFGATDQDWVLVHDAARPGITPTLIRTLVATLKDDPVGGILALPVADTLKRVPTGGDAIARTESRDALWQAQTPQMFRIGMLRDAILRAQREGHDLTDEASAIEWAGHTPRVVQGSLRNFKVTYPEDFALAEAILAAPAHAS.

The protein belongs to the IspD/TarI cytidylyltransferase family. IspD subfamily.

It carries out the reaction 2-C-methyl-D-erythritol 4-phosphate + CTP + H(+) = 4-CDP-2-C-methyl-D-erythritol + diphosphate. Its pathway is isoprenoid biosynthesis; isopentenyl diphosphate biosynthesis via DXP pathway; isopentenyl diphosphate from 1-deoxy-D-xylulose 5-phosphate: step 2/6. Catalyzes the formation of 4-diphosphocytidyl-2-C-methyl-D-erythritol from CTP and 2-C-methyl-D-erythritol 4-phosphate (MEP). The chain is 2-C-methyl-D-erythritol 4-phosphate cytidylyltransferase from Burkholderia vietnamiensis (strain G4 / LMG 22486) (Burkholderia cepacia (strain R1808)).